The sequence spans 554 residues: 3-(3-hydroxy-phenyl)propionate/3-hydroxycinnamic acid hydroxylase (554 aa).

FAD contacts are provided by residues 17 to 46 (QVAIAGAGPVGLMMANYLGQMGIDVLVVEK) and 285 to 295 (FRIDRVLLAGD).

The protein belongs to the PheA/TfdB FAD monooxygenase family. FAD is required as a cofactor.

The enzyme catalyses 3-(3-hydroxyphenyl)propanoate + NADH + O2 + H(+) = 3-(2,3-dihydroxyphenyl)propanoate + NAD(+) + H2O. It catalyses the reaction (2E)-3-(3-hydroxyphenyl)prop-2-enoate + NADH + O2 + H(+) = (2E)-3-(2,3-dihydroxyphenyl)prop-2-enoate + NAD(+) + H2O. It participates in aromatic compound metabolism; 3-phenylpropanoate degradation. Functionally, catalyzes the insertion of one atom of molecular oxygen into position 2 of the phenyl ring of 3-(3-hydroxyphenyl)propionate (3-HPP) and hydroxycinnamic acid (3HCI). In Escherichia coli O8 (strain IAI1), this protein is 3-(3-hydroxy-phenyl)propionate/3-hydroxycinnamic acid hydroxylase.